Reading from the N-terminus, the 194-residue chain is Probable GTP-binding protein EngB (194 aa).

The EngB-type G domain occupies 22-194 (KIPQIAIVGK…LRIFEEVIEK (173 aa)). GTP is bound by residues 30-37 (GKSNVGKS), 57-61 (GKTRG), 75-78 (DLPG), 142-145 (TKAD), and 173-175 (FSA). Residues S37 and T59 each contribute to the Mg(2+) site.

This sequence belongs to the TRAFAC class TrmE-Era-EngA-EngB-Septin-like GTPase superfamily. EngB GTPase family. It depends on Mg(2+) as a cofactor.

In terms of biological role, necessary for normal cell division and for the maintenance of normal septation. The chain is Probable GTP-binding protein EngB from Caldanaerobacter subterraneus subsp. tengcongensis (strain DSM 15242 / JCM 11007 / NBRC 100824 / MB4) (Thermoanaerobacter tengcongensis).